An 853-amino-acid polypeptide reads, in one-letter code: DNA mismatch repair protein MutS (853 aa).

614 to 621 (GPNMGGKS) is a binding site for ATP.

It belongs to the DNA mismatch repair MutS family.

Functionally, this protein is involved in the repair of mismatches in DNA. It is possible that it carries out the mismatch recognition step. This protein has a weak ATPase activity. The sequence is that of DNA mismatch repair protein MutS from Escherichia coli (strain K12 / MC4100 / BW2952).